Reading from the N-terminus, the 277-residue chain is Large ribosomal subunit protein uL2 (277 aa).

The segment at 227–277 (VMNPVDHPHGGGEGRTSGGRHPVTPWGVPTKGKKTRSKTKASDRLIMRRRK) is disordered. Residues 266 to 277 (KASDRLIMRRRK) show a composition bias toward basic and acidic residues.

Belongs to the universal ribosomal protein uL2 family. As to quaternary structure, part of the 50S ribosomal subunit. Forms a bridge to the 30S subunit in the 70S ribosome.

Functionally, one of the primary rRNA binding proteins. Required for association of the 30S and 50S subunits to form the 70S ribosome, for tRNA binding and peptide bond formation. It has been suggested to have peptidyltransferase activity; this is somewhat controversial. Makes several contacts with the 16S rRNA in the 70S ribosome. The polypeptide is Large ribosomal subunit protein uL2 (Magnetococcus marinus (strain ATCC BAA-1437 / JCM 17883 / MC-1)).